A 139-amino-acid chain; its full sequence is Natriuretic peptide Mc-NP (139 aa).

The signal sequence occupies residues 1-25 (MVGLSRLRGGGLLLVLALLPLALDG). A propeptide spanning residues 26-75 (KPLEEAPTAPSRIIPFSRPVRKQSQAVLDPMVHPERPAGSGDDGDSRRLE) is cleaved from the precursor. The segment at 45–72 (VRKQSQAVLDPMVHPERPAGSGDDGDSR) is disordered. A disulfide bridge links C86 with C102. Positions 117–139 (IIPFSRPVRKESRAALDRMQQPG) are excised as a propeptide.

Belongs to the natriuretic peptide family. As to expression, expressed by the venom gland.

The protein resides in the secreted. Snake venom natriuretic peptide that dose-dependently induces the rapid relaxation of rat aortic strips phenylephrine-precontracted. Acts by stimulating cGMP production in a dose-dependent manner (by probably activating NPR1 and/or NPR2). May also show potent hypotensive effects. A synthetic peptide (AA 77-108, where the Cys-95 is replaced by a Ser) increases sodium excretion and urinary volume in rat kidneys. This is Natriuretic peptide Mc-NP from Micrurus corallinus (Brazilian coral snake).